Reading from the N-terminus, the 144-residue chain is Small ribosomal subunit protein uS19 (144 aa).

It belongs to the universal ribosomal protein uS19 family.

In Dictyostelium discoideum (Social amoeba), this protein is Small ribosomal subunit protein uS19 (rps15).